The following is a 296-amino-acid chain: tRNA (guanine(9)-N1)-methyltransferase (296 aa).

Residues 1 to 33 (MTPETNNDETLSRPKPRAALPPVPEGMSKSQWK) form a disordered region. The 190-residue stretch at 85–274 (TPRVNVNQKD…SVLPARKLAE (190 aa)) folds into the SAM-dependent MTase TRM10-type domain. S-adenosyl-L-methionine-binding positions include 181 to 182 (LT), Gly-201, 205 to 209 (DKNRH), Cys-213, Leu-227, and 239 to 241 (KVL). Catalysis depends on Asp-205, which acts as the Proton acceptor. Residues 277-296 (DHAQESNSSSPAEEQDAQDI) are disordered.

The protein belongs to the class IV-like SAM-binding methyltransferase superfamily. TRM10 family. Monomer.

It localises to the cytoplasm. The protein resides in the nucleus. The enzyme catalyses guanosine(9) in tRNA + S-adenosyl-L-methionine = N(1)-methylguanosine(9) in tRNA + S-adenosyl-L-homocysteine + H(+). Functionally, S-adenosyl-L-methionine-dependent guanine N(1)-methyltransferase that catalyzes the formation of N(1)-methylguanine at position 9 (m1G9) in cytoplasmic tRNA. The chain is tRNA (guanine(9)-N1)-methyltransferase from Eremothecium gossypii (strain ATCC 10895 / CBS 109.51 / FGSC 9923 / NRRL Y-1056) (Yeast).